Reading from the N-terminus, the 565-residue chain is Mitochondrial distribution and morphology protein 34 (565 aa).

Positions 1 to 208 (MAFNFNWSPL…VPEYRDRESE (208 aa)) constitute an SMP-LTD domain. Residues 209–220 (SVNTLDLSSESG) are compositionally biased toward polar residues. Disordered stretches follow at residues 209 to 241 (SVNT…GNAL), 347 to 463 (FGSY…SRSA), and 533 to 565 (MQEQ…AYGH). A compositionally biased stretch (basic residues) spans 353 to 367 (PGRHSRSHTKKRKKR). Basic and acidic residues predominate over residues 368-378 (VVDLRRPKTTD). Over residues 382–391 (SVSGDSVFSS) the composition is skewed to low complexity. Composition is skewed to polar residues over residues 392–402 (ENATSAPTIFS) and 439–463 (QGDQ…SRSA).

Belongs to the MDM34 family. As to quaternary structure, component of the ER-mitochondria encounter structure (ERMES) or MDM complex, composed of mmm1, mdm10, mdm12 and mdm34.

The protein localises to the mitochondrion outer membrane. Its function is as follows. Component of the ERMES/MDM complex, which serves as a molecular tether to connect the endoplasmic reticulum (ER) and mitochondria. Components of this complex are involved in the control of mitochondrial shape and protein biogenesis, and function in nonvesicular lipid trafficking between the ER and mitochondria. Mdm34 is required for the interaction of the ER-resident membrane protein mmm1 and the outer mitochondrial membrane-resident beta-barrel protein mdm10. This chain is Mitochondrial distribution and morphology protein 34, found in Talaromyces marneffei (strain ATCC 18224 / CBS 334.59 / QM 7333) (Penicillium marneffei).